Reading from the N-terminus, the 145-residue chain is Cell division protein SepF (145 aa).

The protein belongs to the SepF family. Homodimer. Interacts with FtsZ.

It localises to the cytoplasm. Cell division protein that is part of the divisome complex and is recruited early to the Z-ring. Probably stimulates Z-ring formation, perhaps through the cross-linking of FtsZ protofilaments. Its function overlaps with FtsA. The sequence is that of Cell division protein SepF from Lactobacillus helveticus (strain DPC 4571).